The following is a 98-amino-acid chain: NADH-ubiquinone oxidoreductase chain 4L (98 aa).

The next 3 helical transmembrane spans lie at Met-1–Val-21, Ser-29–Leu-49, and Ile-61–Val-81.

Belongs to the complex I subunit 4L family. In terms of assembly, core subunit of respiratory chain NADH dehydrogenase (Complex I) which is composed of 45 different subunits.

The protein localises to the mitochondrion inner membrane. It carries out the reaction a ubiquinone + NADH + 5 H(+)(in) = a ubiquinol + NAD(+) + 4 H(+)(out). Core subunit of the mitochondrial membrane respiratory chain NADH dehydrogenase (Complex I) which catalyzes electron transfer from NADH through the respiratory chain, using ubiquinone as an electron acceptor. Part of the enzyme membrane arm which is embedded in the lipid bilayer and involved in proton translocation. This chain is NADH-ubiquinone oxidoreductase chain 4L (MT-ND4L), found in Lynx canadensis (Canada lynx).